Here is a 153-residue protein sequence, read N- to C-terminus: Lipoprotein signal peptidase (153 aa).

The next 3 helical transmembrane spans lie at 6–26 (IVAVIVLLLIGLDQLVKSYIV), 60–80 (QQLLFAVITLVVVIGAIWYLH), and 85–105 (DSFWMVLGLTLIIAGGLGNFI). Residues aspartate 115 and aspartate 131 contribute to the active site. The chain crosses the membrane as a helical span at residues 124–144 (FAIFNVADSYLTVGVIILLIA).

Belongs to the peptidase A8 family.

It localises to the cell membrane. The catalysed reaction is Release of signal peptides from bacterial membrane prolipoproteins. Hydrolyzes -Xaa-Yaa-Zaa-|-(S,diacylglyceryl)Cys-, in which Xaa is hydrophobic (preferably Leu), and Yaa (Ala or Ser) and Zaa (Gly or Ala) have small, neutral side chains.. Its pathway is protein modification; lipoprotein biosynthesis (signal peptide cleavage). Functionally, this protein specifically catalyzes the removal of signal peptides from prolipoproteins. The protein is Lipoprotein signal peptidase of Streptococcus pneumoniae (strain ATCC BAA-255 / R6).